Reading from the N-terminus, the 372-residue chain is Chorismate synthase (372 aa).

2 residues coordinate NADP(+): Arg-48 and Arg-54. Residues 125–127, 238–239, Gly-278, 293–297, and Arg-319 contribute to the FMN site; these read RSS, NA, and KPTSS.

Belongs to the chorismate synthase family. In terms of assembly, homotetramer. It depends on FMNH2 as a cofactor.

The enzyme catalyses 5-O-(1-carboxyvinyl)-3-phosphoshikimate = chorismate + phosphate. The protein operates within metabolic intermediate biosynthesis; chorismate biosynthesis; chorismate from D-erythrose 4-phosphate and phosphoenolpyruvate: step 7/7. Functionally, catalyzes the anti-1,4-elimination of the C-3 phosphate and the C-6 proR hydrogen from 5-enolpyruvylshikimate-3-phosphate (EPSP) to yield chorismate, which is the branch point compound that serves as the starting substrate for the three terminal pathways of aromatic amino acid biosynthesis. This reaction introduces a second double bond into the aromatic ring system. The sequence is that of Chorismate synthase from Xylella fastidiosa (strain M23).